The primary structure comprises 375 residues: Glutamate 5-kinase (375 aa).

K17 provides a ligand contact to ATP. Residues S57, D144, and N156 each contribute to the substrate site. Position 176–177 (176–177 (TD)) interacts with ATP. Residues 283-361 (KGELILDTGA…DEIEGILGYV (79 aa)) enclose the PUA domain.

The protein belongs to the glutamate 5-kinase family.

It is found in the cytoplasm. It carries out the reaction L-glutamate + ATP = L-glutamyl 5-phosphate + ADP. Its pathway is amino-acid biosynthesis; L-proline biosynthesis; L-glutamate 5-semialdehyde from L-glutamate: step 1/2. Functionally, catalyzes the transfer of a phosphate group to glutamate to form L-glutamate 5-phosphate. The chain is Glutamate 5-kinase from Thioalkalivibrio sulfidiphilus (strain HL-EbGR7).